Here is a 252-residue protein sequence, read N- to C-terminus: Acetoacetate decarboxylase (252 aa).

The active-site Schiff-base intermediate with acetoacetate is Lys-116.

The protein belongs to the ADC family.

The enzyme catalyses acetoacetate + H(+) = acetone + CO2. Functionally, catalyzes the conversion of acetoacetate to acetone and carbon dioxide. The chain is Acetoacetate decarboxylase from Paraburkholderia phytofirmans (strain DSM 17436 / LMG 22146 / PsJN) (Burkholderia phytofirmans).